The chain runs to 150 residues: Probable FKBP-type 16 kDa peptidyl-prolyl cis-trans isomerase (150 aa).

Residues 14-88 (NTEVTLHFAL…PNPQNVQIIP (75 aa)) enclose the PPIase FKBP-type domain.

The protein belongs to the FKBP-type PPIase family.

The catalysed reaction is [protein]-peptidylproline (omega=180) = [protein]-peptidylproline (omega=0). Functionally, PPIases accelerate the folding of proteins. This chain is Probable FKBP-type 16 kDa peptidyl-prolyl cis-trans isomerase (yaaD), found in Pseudomonas fluorescens.